The chain runs to 283 residues: 5'-nucleotidase SurE (283 aa).

Aspartate 14, aspartate 15, serine 47, and asparagine 105 together coordinate a divalent metal cation.

This sequence belongs to the SurE nucleotidase family. The cofactor is a divalent metal cation.

The protein resides in the cytoplasm. The catalysed reaction is a ribonucleoside 5'-phosphate + H2O = a ribonucleoside + phosphate. Its function is as follows. Nucleotidase that shows phosphatase activity on nucleoside 5'-monophosphates. This chain is 5'-nucleotidase SurE, found in Chlamydia trachomatis serovar D (strain ATCC VR-885 / DSM 19411 / UW-3/Cx).